A 361-amino-acid chain; its full sequence is Cysteine-rich with EGF-like domain protein 2-B (361 aa).

A signal peptide spans methionine 1–alanine 24. The EGF-like 1 domain maps to aspartate 134–leucine 176. Intrachain disulfides connect cysteine 138-cysteine 152, cysteine 146-cysteine 164, and cysteine 166-cysteine 175. Residue asparagine 188 is glycosylated (N-linked (GlcNAc...) asparagine). FU repeat units follow at residues histidine 191 to proline 238 and serine 251 to leucine 298. The 42-residue stretch at aspartate 288–valine 329 folds into the EGF-like 2; calcium-binding domain. Cystine bridges form between cysteine 292/cysteine 306, cysteine 299/cysteine 315, and cysteine 317/cysteine 328. Residues isoleucine 339 to leucine 361 form a disordered region. Positions threonine 346–asparagine 355 are enriched in polar residues.

Belongs to the CRELD family.

It localises to the secreted. It is found in the endoplasmic reticulum. Possible role in neuronal acetylcholine receptor transport. This Xenopus laevis (African clawed frog) protein is Cysteine-rich with EGF-like domain protein 2-B (creld2-b).